A 502-amino-acid polypeptide reads, in one-letter code: UDP-N-acetylmuramate--L-alanine ligase (502 aa).

119–125 (GSHGKST) contacts ATP.

This sequence belongs to the MurCDEF family.

The protein resides in the cytoplasm. The enzyme catalyses UDP-N-acetyl-alpha-D-muramate + L-alanine + ATP = UDP-N-acetyl-alpha-D-muramoyl-L-alanine + ADP + phosphate + H(+). It participates in cell wall biogenesis; peptidoglycan biosynthesis. Its function is as follows. Cell wall formation. This Frankia casuarinae (strain DSM 45818 / CECT 9043 / HFP020203 / CcI3) protein is UDP-N-acetylmuramate--L-alanine ligase.